The chain runs to 149 residues: Large ribosomal subunit protein eL19 (149 aa).

A compositionally biased stretch (basic and acidic residues) spans Lys55–Lys69. The disordered stretch occupies residues Lys55–Lys93. Residues Arg70 to Thr88 show a composition bias toward basic residues.

This sequence belongs to the eukaryotic ribosomal protein eL19 family. As to quaternary structure, part of the 50S ribosomal subunit.

Functionally, binds to the 23S rRNA. The chain is Large ribosomal subunit protein eL19 from Methanococcus vannielii.